The chain runs to 133 residues: Small ribosomal subunit protein uS8 (133 aa).

It belongs to the universal ribosomal protein uS8 family. As to quaternary structure, part of the 30S ribosomal subunit.

In terms of biological role, one of the primary rRNA binding proteins, it binds directly to 16S rRNA central domain where it helps coordinate assembly of the platform of the 30S subunit. The sequence is that of Small ribosomal subunit protein uS8 from Sulfolobus acidocaldarius (strain ATCC 33909 / DSM 639 / JCM 8929 / NBRC 15157 / NCIMB 11770).